The sequence spans 972 residues: Structural polyprotein (972 aa).

Asp26 is an a divalent metal cation binding site. The Peptidase S50 domain maps to 509–734; that stretch reads SGSEAGSYSK…YLGQLMRTTA (226 aa). Residue Ser633 is the Nucleophile of the active site. Lys674 is an active-site residue. Disordered regions lie at residues 797-817 and 917-972; these read STPP…AQEA and GGRG…DGEV. Basic and acidic residues predominate over residues 801-817; sequence KHQEKPKGPDQHTAQEA.

In terms of assembly, homotrimer. A central divalent metal (possibly cobalt) stabilizes the VP2 trimer. Homodimer. interacts (via C-terminus) with VP1 in the cytoplasm. Interacts with VP2. In terms of processing, specific enzymatic cleavages yield mature proteins. Capsid assembly seems to be regulated by polyprotein processing. The protease VP4 cleaves itself off the polyprotein, thus releasing pre-VP2 and VP3 within the infected cell. During capsid assembly, the C-terminus of pre-VP2 is further processed by VP4, giving rise to VP2, the external capsid protein and three small peptides that all stay closely associated with the capsid.

The protein resides in the virion. It localises to the host cytoplasm. Functionally, capsid protein VP2 self assembles to form an icosahedral capsid with a T=13 symmetry, about 70 nm in diameter, and consisting of 260 VP2 trimers. The capsid encapsulates the genomic dsRNA. VP2 is also involved in attachment and entry into the host cell. The precursor of VP2 plays an important role in capsid assembly. First, pre-VP2 and VP2 oligomers assemble to form a procapsid. Then, the pre-VP2 intermediates may be processed into VP2 proteins by proteolytic cleavage mediated by VP4 to obtain the mature virion. The final capsid is composed of pentamers and hexamers but VP2 has a natural tendency to assemble into all-pentameric structures. Therefore pre-VP2 may be required to allow formation of the hexameric structures. Its function is as follows. Protease VP4 is a serine protease that cleaves the polyprotein into its final products. Pre-VP2 is first partially cleaved, and may be completely processed by VP4 upon capsid maturation. In terms of biological role, capsid protein VP3 plays a key role in virion assembly by providing a scaffold for the capsid composed of VP2. May self-assemble to form a T=4-like icosahedral inner-capsid composed of at least 180 trimers. Plays a role in genomic RNA packaging by recruiting VP1 into the capsid and interacting with the dsRNA genome segments to form a ribonucleoprotein complex. Additionally, the interaction of the VP3 C-terminal tail with VP1 removes the inherent structural blockade of the polymerase active site. Thus, VP3 can also function as a transcriptional activator. Functionally, structural peptide 1 is a small peptide derived from the C-terminus of pre-VP2. It destabilizes and perforates cell membranes, suggesting a role during viral entry. Structural peptide 2 is a small peptide derived from the C-terminus of pre-VP2. It is not essential for virus viability, but viral growth is affected when this protein is absent. Its function is as follows. Structural peptide 3 is a small peptide derived from pre-VP2 C-terminus. It is not essential for virus viability, but viral growth is affected when this protein is absent. The sequence is that of Structural polyprotein from Oncorhynchus mykiss (Rainbow trout).